The chain runs to 213 residues: Thymidylate kinase (213 aa).

ATP is bound at residue 11 to 18; that stretch reads GPEGAGKT.

The protein belongs to the thymidylate kinase family.

The catalysed reaction is dTMP + ATP = dTDP + ADP. Functionally, phosphorylation of dTMP to form dTDP in both de novo and salvage pathways of dTTP synthesis. The protein is Thymidylate kinase of Leuconostoc mesenteroides subsp. mesenteroides (strain ATCC 8293 / DSM 20343 / BCRC 11652 / CCM 1803 / JCM 6124 / NCDO 523 / NBRC 100496 / NCIMB 8023 / NCTC 12954 / NRRL B-1118 / 37Y).